The chain runs to 414 residues: Serine hydroxymethyltransferase (414 aa).

(6S)-5,6,7,8-tetrahydrofolate-binding positions include Leu-117 and 121 to 123; that span reads GHL. Lys-226 bears the N6-(pyridoxal phosphate)lysine mark. Residue 349-351 participates in (6S)-5,6,7,8-tetrahydrofolate binding; sequence SPF.

Belongs to the SHMT family. In terms of assembly, homodimer. Requires pyridoxal 5'-phosphate as cofactor.

It is found in the cytoplasm. It carries out the reaction (6R)-5,10-methylene-5,6,7,8-tetrahydrofolate + glycine + H2O = (6S)-5,6,7,8-tetrahydrofolate + L-serine. It functions in the pathway one-carbon metabolism; tetrahydrofolate interconversion. It participates in amino-acid biosynthesis; glycine biosynthesis; glycine from L-serine: step 1/1. Its function is as follows. Catalyzes the reversible interconversion of serine and glycine with tetrahydrofolate (THF) serving as the one-carbon carrier. This reaction serves as the major source of one-carbon groups required for the biosynthesis of purines, thymidylate, methionine, and other important biomolecules. Also exhibits THF-independent aldolase activity toward beta-hydroxyamino acids, producing glycine and aldehydes, via a retro-aldol mechanism. This Desulfovibrio desulfuricans (strain ATCC 27774 / DSM 6949 / MB) protein is Serine hydroxymethyltransferase.